The following is a 193-amino-acid chain: Potassium-transporting ATPase KdpC subunit (193 aa).

Residues 14–34 (ITFTFLVLCGLVYPLIVTGIA) traverse the membrane as a helical segment.

The protein belongs to the KdpC family. As to quaternary structure, the system is composed of three essential subunits: KdpA, KdpB and KdpC.

The protein localises to the cell membrane. Its function is as follows. Part of the high-affinity ATP-driven potassium transport (or Kdp) system, which catalyzes the hydrolysis of ATP coupled with the electrogenic transport of potassium into the cytoplasm. This subunit acts as a catalytic chaperone that increases the ATP-binding affinity of the ATP-hydrolyzing subunit KdpB by the formation of a transient KdpB/KdpC/ATP ternary complex. The protein is Potassium-transporting ATPase KdpC subunit of Bacillus cereus (strain ATCC 10987 / NRS 248).